Consider the following 62-residue polypeptide: uncharacterized protein (62 aa).

This is an uncharacterized protein from Mesomycoplasma hyorhinis (Mycoplasma hyorhinis).